Consider the following 457-residue polypeptide: Ribulose bisphosphate carboxylase large chain (457 aa).

Positions 1–2 (MS) are excised as a propeptide. An N-acetylproline modification is found at P3. K14 carries the N6,N6,N6-trimethyllysine modification. Residues N123 and T173 each coordinate substrate. K175 acts as the Proton acceptor in catalysis. A substrate-binding site is contributed by K177. Residues K201, D203, and E204 each contribute to the Mg(2+) site. The residue at position 201 (K201) is an N6-carboxylysine. The active-site Proton acceptor is the H294. R295, H327, and S379 together coordinate substrate.

Belongs to the RuBisCO large chain family. Type I subfamily. As to quaternary structure, heterohexadecamer of 8 large chains and 8 small chains; disulfide-linked. The disulfide link is formed within the large subunit homodimers. It depends on Mg(2+) as a cofactor. In terms of processing, the disulfide bond which can form in the large chain dimeric partners within the hexadecamer appears to be associated with oxidative stress and protein turnover.

The protein resides in the plastid. Its subcellular location is the chloroplast. The enzyme catalyses 2 (2R)-3-phosphoglycerate + 2 H(+) = D-ribulose 1,5-bisphosphate + CO2 + H2O. The catalysed reaction is D-ribulose 1,5-bisphosphate + O2 = 2-phosphoglycolate + (2R)-3-phosphoglycerate + 2 H(+). RuBisCO catalyzes two reactions: the carboxylation of D-ribulose 1,5-bisphosphate, the primary event in carbon dioxide fixation, as well as the oxidative fragmentation of the pentose substrate in the photorespiration process. Both reactions occur simultaneously and in competition at the same active site. The polypeptide is Ribulose bisphosphate carboxylase large chain (Phelline comosa).